A 956-amino-acid polypeptide reads, in one-letter code: Bromodomain testis-specific protein (956 aa).

A Bromo 1 domain is found at 26–132; the sequence is RLTNQLQFLQ…KLFMQKLSQM (107 aa). S186 carries the phosphoserine modification. Residues 208–219 carry the Nuclear localization signal motif; it reads KGVKRRADTTTP. The disordered stretch occupies residues 210–239; sequence VKRRADTTTPTTSIAKASSESPPTLRETKP. The span at 216-231 shows a compositional bias: polar residues; that stretch reads TTTPTTSIAKASSESP. One can recognise a Bromo 2 domain in the interval 266 to 375; sequence VKVTEQLKHC…DVFELHFAKI (110 aa). Disordered regions lie at residues 391–420, 442–508, 607–747, and 859–934; these read NSAQ…ERVQ, VPLR…PMNY, NQLN…HSQQ, and LEHN…RREA. Low complexity predominate over residues 392–409; it reads SAQALSRESSSEASSGDA. Residues 417 to 442 adopt a coiled-coil conformation; the sequence is ERVQHLAKLQEQLNAVHQQLQVLSQV. Residues 445–463 are compositionally biased toward basic residues; it reads RKLKKKNEKSKRAPKRKKV. An NET domain is found at 496-578; the sequence is KSEEEDNAKP…ACLRKRSLKP (83 aa). Residues 625 to 640 are compositionally biased toward pro residues; the sequence is PPPPPPPPPPPPPPPE. A compositionally biased stretch (low complexity) spans 649–688; it reads DSSSSSGSGSGSSSSSSGSSSSSSSSGSASSSSDSSSSDS. Positions 714–724 are enriched in polar residues; the sequence is KQIQSSVQDIT. Positions 844 to 940 form a coiled coil; the sequence is EKEVKARTQE…RREAMAGTID (97 aa). Basic and acidic residues-rich tracts occupy residues 859–874 and 915–934; these read LEHN…ENQR and LLKD…RREA.

The protein belongs to the BET family. As to quaternary structure, interacts with SMARCE1. Interacts with mRNA splicing machinery proteins SRSF2, DDX5, HNRNPK and TARDBP. Interacts with the acetylated N-terminus of histone H1, H2, H3 and H4. Interacts with P-TEFb components CDK9 and CCNT1/cyclin-T1. Ubiquitinated in a SPOP-dependent manner, leading to proteasomal degradation. As to expression, testis-specific. Expressed in germinal cells from the early meiotic (pachytene) spermatocytes and during spermiogenesis in the round and elongating spermatids until the condensed late spermatids. No expression seen in spermatogonia.

It localises to the nucleus. Functionally, testis-specific chromatin protein that specifically binds histone H4 acetylated at 'Lys-5' and 'Lys-8' (H4K5ac and H4K8ac, respectively) and plays a key role in spermatogenesis. Required in late pachytene spermatocytes: plays a role in meiotic and post-meiotic cells by binding to acetylated histones at the promoter of specific meiotic and post-meiotic genes, facilitating their activation at the appropriate time. In the post-meiotic phase of spermatogenesis, binds to hyperacetylated histones and participates in their general removal from DNA. Also recognizes and binds a subset of butyrylated histones: able to bind histone H4 butyrylated at 'Lys-8' (H4K8ac), while it is not able to bind H4 butyrylated at 'Lys-5' (H4K5ac). Also acts as a component of the splicing machinery in pachytene spermatocytes and round spermatids and participates in 3'-UTR truncation of specific mRNAs in post-meiotic spermatids. Required for chromocenter organization, a structure comprised of peri-centromeric heterochromatin. The sequence is that of Bromodomain testis-specific protein (Brdt) from Mus musculus (Mouse).